Reading from the N-terminus, the 434-residue chain is NADH-quinone oxidoreductase subunit F 1 (434 aa).

54–63 (GRGGAGFPTG) lines the NAD(+) pocket. 166–213 (GAGAYICGEETALLESLEGKKGQPRLKPPFPANMGLYGCPTTVNNVES) is a binding site for FMN. The [4Fe-4S] cluster site is built by cysteine 345, cysteine 348, cysteine 351, and cysteine 391.

This sequence belongs to the complex I 51 kDa subunit family. FMN is required as a cofactor. The cofactor is [4Fe-4S] cluster.

It carries out the reaction a quinone + NADH + 5 H(+)(in) = a quinol + NAD(+) + 4 H(+)(out). Its function is as follows. NDH-1 shuttles electrons from NADH, via FMN and iron-sulfur (Fe-S) centers, to quinones in the respiratory chain. The immediate electron acceptor for the enzyme in this species is believed to be ubiquinone. Couples the redox reaction to proton translocation (for every two electrons transferred, four hydrogen ions are translocated across the cytoplasmic membrane), and thus conserves the redox energy in a proton gradient. This is NADH-quinone oxidoreductase subunit F 1 (nuoF1) from Rhizobium meliloti (strain 1021) (Ensifer meliloti).